Reading from the N-terminus, the 769-residue chain is Apoptotic enhancer 1 protein (769 aa).

Disordered stretches follow at residues 69–88 (PVRVVAQPPPPHPQALSQQY), 265–396 (SVEP…LDES), and 451–518 (PQLP…RSDD). Low complexity predominate over residues 275–284 (QQQQPSPQMM). Positions 285-295 (KSEEFSEKRDL) are enriched in basic and acidic residues. Residues 339-353 (STDPHSNHSSPSTSS) show a composition bias toward low complexity. Polar residues-rich tracts occupy residues 354–378 (QKAPTLITFSPPSFEQKINSSTMTR), 453–467 (LPTSQEEPSAITSET), and 474–491 (NSESKQVATSSDSTNNLE). ANK repeat units lie at residues 585 to 617 (EGITALHNAICAGHYEIVRFLIENDADVNAQDS) and 618 to 652 (DGWTPLHCAASCNNLPMVRQLVEGGGCVLASTLSD). One can recognise an SH3 domain in the interval 684–746 (INTGKVYAAY…PRTYLALYPS (63 aa)).

This sequence belongs to the iASPP family. In terms of assembly, interacts with cep-1/p53; the interaction inhibits pro-apoptotic activity of cep-1.

It localises to the nucleus. Negetively regulates apoptosis via its interaction with cep-1. This chain is Apoptotic enhancer 1 protein, found in Caenorhabditis elegans.